We begin with the raw amino-acid sequence, 25 residues long: Glutamine synthetase 2 isozyme (25 aa).

The protein belongs to the glutamine synthetase family. As to quaternary structure, homohexamer.

It localises to the plastid. It is found in the chloroplast. It catalyses the reaction L-glutamate + NH4(+) + ATP = L-glutamine + ADP + phosphate + H(+). In terms of biological role, plays a key role in the nitrogen metabolism of microorganisms, animals and plants. The chain is Glutamine synthetase 2 isozyme from Emiliania huxleyi (Coccolithophore).